A 249-amino-acid polypeptide reads, in one-letter code: uncharacterized protein (249 aa).

Belongs to the AIM2 family.

The protein resides in the cytoplasm. It localises to the nucleus. This is an uncharacterized protein from Schizosaccharomyces pombe (strain 972 / ATCC 24843) (Fission yeast).